A 430-amino-acid polypeptide reads, in one-letter code: Tyrosine--tRNA ligase (430 aa).

Y32 lines the L-tyrosine pocket. The 'HIGH' region motif lies at 37-46 (PTADSLHIGH). L-tyrosine contacts are provided by Y172 and Q176. The short motif at 232–236 (KFGKT) is the 'KMSKS' region element. K235 is an ATP binding site. The 68-residue stretch at 362-429 (VKAVDLFVDN…GKKNYYLIIA (68 aa)) folds into the S4 RNA-binding domain.

The protein belongs to the class-I aminoacyl-tRNA synthetase family. TyrS type 1 subfamily. Homodimer.

It localises to the cytoplasm. It carries out the reaction tRNA(Tyr) + L-tyrosine + ATP = L-tyrosyl-tRNA(Tyr) + AMP + diphosphate + H(+). Its function is as follows. Catalyzes the attachment of tyrosine to tRNA(Tyr) in a two-step reaction: tyrosine is first activated by ATP to form Tyr-AMP and then transferred to the acceptor end of tRNA(Tyr). The chain is Tyrosine--tRNA ligase from Bacteroides fragilis (strain ATCC 25285 / DSM 2151 / CCUG 4856 / JCM 11019 / LMG 10263 / NCTC 9343 / Onslow / VPI 2553 / EN-2).